Reading from the N-terminus, the 185-residue chain is Elongation factor P (185 aa).

Belongs to the elongation factor P family.

It localises to the cytoplasm. It participates in protein biosynthesis; polypeptide chain elongation. In terms of biological role, involved in peptide bond synthesis. Stimulates efficient translation and peptide-bond synthesis on native or reconstituted 70S ribosomes in vitro. Probably functions indirectly by altering the affinity of the ribosome for aminoacyl-tRNA, thus increasing their reactivity as acceptors for peptidyl transferase. This chain is Elongation factor P, found in Symbiobacterium thermophilum (strain DSM 24528 / JCM 14929 / IAM 14863 / T).